The primary structure comprises 401 residues: Lipid-A-disaccharide synthase (401 aa).

Belongs to the LpxB family.

It catalyses the reaction a lipid X + a UDP-2-N,3-O-bis[(3R)-3-hydroxyacyl]-alpha-D-glucosamine = a lipid A disaccharide + UDP + H(+). The protein operates within bacterial outer membrane biogenesis; LPS lipid A biosynthesis. In terms of biological role, condensation of UDP-2,3-diacylglucosamine and 2,3-diacylglucosamine-1-phosphate to form lipid A disaccharide, a precursor of lipid A, a phosphorylated glycolipid that anchors the lipopolysaccharide to the outer membrane of the cell. The polypeptide is Lipid-A-disaccharide synthase (Ruegeria pomeroyi (strain ATCC 700808 / DSM 15171 / DSS-3) (Silicibacter pomeroyi)).